A 92-amino-acid polypeptide reads, in one-letter code: Cell division topological specificity factor (92 aa).

Belongs to the MinE family.

Its function is as follows. Prevents the cell division inhibition by proteins MinC and MinD at internal division sites while permitting inhibition at polar sites. This ensures cell division at the proper site by restricting the formation of a division septum at the midpoint of the long axis of the cell. The protein is Cell division topological specificity factor of Syntrophobacter fumaroxidans (strain DSM 10017 / MPOB).